The following is a 340-amino-acid chain: Selenide, water dikinase (340 aa).

U17 is a catalytic residue. A non-standard amino acid (selenocysteine) is located at residue U17. Residues K20 and 45 to 47 each bind ATP; that span reads NNE. A Mg(2+)-binding site is contributed by D48. ATP is bound by residues D65, D88, and 136-138; that span reads GHT. D88 is a Mg(2+) binding site. Position 224 (D224) interacts with Mg(2+).

This sequence belongs to the selenophosphate synthase 1 family. Class I subfamily. Homodimer. The cofactor is Mg(2+).

It carries out the reaction hydrogenselenide + ATP + H2O = selenophosphate + AMP + phosphate + 2 H(+). Functionally, synthesizes selenophosphate from selenide and ATP. This chain is Selenide, water dikinase, found in Campylobacter jejuni (strain RM1221).